The sequence spans 157 residues: 2-C-methyl-D-erythritol 2,4-cyclodiphosphate synthase (157 aa).

A divalent metal cation-binding residues include aspartate 8 and histidine 10. 4-CDP-2-C-methyl-D-erythritol 2-phosphate-binding positions include 8-10 and 34-35; these read DVH and HS. Residue histidine 42 participates in a divalent metal cation binding. Residues 56 to 58, 61 to 65, 100 to 106, 132 to 135, phenylalanine 139, and arginine 142 each bind 4-CDP-2-C-methyl-D-erythritol 2-phosphate; these read DIG, FPDTD, AQAPKMA, and TTSE.

This sequence belongs to the IspF family. Homotrimer. A divalent metal cation is required as a cofactor.

It catalyses the reaction 4-CDP-2-C-methyl-D-erythritol 2-phosphate = 2-C-methyl-D-erythritol 2,4-cyclic diphosphate + CMP. It functions in the pathway isoprenoid biosynthesis; isopentenyl diphosphate biosynthesis via DXP pathway; isopentenyl diphosphate from 1-deoxy-D-xylulose 5-phosphate: step 4/6. In terms of biological role, involved in the biosynthesis of isopentenyl diphosphate (IPP) and dimethylallyl diphosphate (DMAPP), two major building blocks of isoprenoid compounds. Catalyzes the conversion of 4-diphosphocytidyl-2-C-methyl-D-erythritol 2-phosphate (CDP-ME2P) to 2-C-methyl-D-erythritol 2,4-cyclodiphosphate (ME-CPP) with a corresponding release of cytidine 5-monophosphate (CMP). In Photobacterium profundum (strain SS9), this protein is 2-C-methyl-D-erythritol 2,4-cyclodiphosphate synthase.